The following is a 285-amino-acid chain: Shikimate dehydrogenase (NADP(+)) (285 aa).

Shikimate contacts are provided by residues 20-22 (SIS) and Ser67. Residue Lys71 is the Proton acceptor of the active site. Glu83 contacts NADP(+). Shikimate is bound by residues Asn92 and Asp107. NADP(+) contacts are provided by residues 129-133 (GAGGA) and Met227. A shikimate-binding site is contributed by Tyr229. Gly250 contacts NADP(+).

It belongs to the shikimate dehydrogenase family. As to quaternary structure, homodimer.

The enzyme catalyses shikimate + NADP(+) = 3-dehydroshikimate + NADPH + H(+). It functions in the pathway metabolic intermediate biosynthesis; chorismate biosynthesis; chorismate from D-erythrose 4-phosphate and phosphoenolpyruvate: step 4/7. Functionally, involved in the biosynthesis of the chorismate, which leads to the biosynthesis of aromatic amino acids. Catalyzes the reversible NADPH linked reduction of 3-dehydroshikimate (DHSA) to yield shikimate (SA). This chain is Shikimate dehydrogenase (NADP(+)), found in Streptococcus gordonii (strain Challis / ATCC 35105 / BCRC 15272 / CH1 / DL1 / V288).